The primary structure comprises 364 residues: MGRWALDVAFVWKAALTLGLVLLYYCFSIGITFYNKWLTKSFHFPLFMTMLHLAVIFLFSALSRALVQCSSHKARVVLSWTDYLRRVAPTALATALDVGLSNWSFLYITVSLYTMTKSSAVLFILIFSLIFKLEELRAALVLVVLLIAGGLFMFTYKSTQFNVEGFALVLGASFIGGIRWTLTQILLQKADLGLQNPIDTMFHLQPLMFLGLFPLFAIFEGLHLSTSEKIFRFQDTGLLLWVLGSLLLGGILAFGLGFSEFLLVSRTSSLTLSIAGIFKEVCTLLLAAHLLGDQISLLNWLGFALCLSGISLHVALKALHSRGDGGPKPLKSLGSSADLELLLRSSQQEEEDGEEEYFVTQGQQ.

Helical transmembrane passes span 14 to 34 (AALTLGLVLLYYCFSIGITFY) and 42 to 62 (FHFPLFMTMLHLAVIFLFSAL). Asn102 carries N-linked (GlcNAc...) asparagine glycosylation. Helical transmembrane passes span 104-124 (SFLYITVSLYTMTKSSAVLFI), 136-156 (LRAALVLVVLLIAGGLFMFTY), 166-186 (FALVLGASFIGGIRWTLTQIL), 202-222 (FHLQPLMFLGLFPLFAIFEGL), 238-258 (LLLWVLGSLLLGGILAFGLGF), 272-292 (LSIAGIFKEVCTLLLAAHLLG), and 295-315 (ISLLNWLGFALCLSGISLHVA). Ser335 and Ser336 each carry phosphoserine.

It belongs to the TPT transporter family. SLC35C subfamily.

The protein localises to the golgi apparatus. It localises to the cis-Golgi network membrane. Its subcellular location is the endoplasmic reticulum-Golgi intermediate compartment membrane. Functionally, may play an important role in the cellular response to tissue hypoxia. May be either a GDP-fucose transporter that competes with SLC35C1 for GDP-fucose, or a factor that otherwise enhances the fucosylation of Notch and is required for optimal Notch signaling in mammalian cells. The polypeptide is Solute carrier family 35 member C2 (Slc35c2) (Mus musculus (Mouse)).